A 506-amino-acid polypeptide reads, in one-letter code: Apolipoprotein N-acyltransferase (506 aa).

6 consecutive transmembrane segments (helical) span residues 24–44 (LALAPFDFWPLVLVSVAMFYL), 58–78 (GWCYGFGLYGAGTSWIYVSIH), 85–105 (ALLAGLLMLLFIAAIALFFAL), 125–145 (LAFAALWLWQEAFRGWFLTGF), 162–182 (LAPVGGVWLISFALGLTAALL), and 192–212 (KSFLAMGVLLLLAPWVAGLAL). A CN hydrolase domain is found at 230–470 (MQGNIEQSMK…RGVLYGEVVP (241 aa)). The active-site Proton acceptor is the E269. Residue K330 is part of the active site. C382 (nucleophile) is an active-site residue. A helical membrane pass occupies residues 482-502 (SWPLAIVCLLLFGWALLAARI).

This sequence belongs to the CN hydrolase family. Apolipoprotein N-acyltransferase subfamily.

It localises to the cell inner membrane. The enzyme catalyses N-terminal S-1,2-diacyl-sn-glyceryl-L-cysteinyl-[lipoprotein] + a glycerophospholipid = N-acyl-S-1,2-diacyl-sn-glyceryl-L-cysteinyl-[lipoprotein] + a 2-acyl-sn-glycero-3-phospholipid + H(+). It functions in the pathway protein modification; lipoprotein biosynthesis (N-acyl transfer). Functionally, catalyzes the phospholipid dependent N-acylation of the N-terminal cysteine of apolipoprotein, the last step in lipoprotein maturation. In Pseudomonas syringae pv. tomato (strain ATCC BAA-871 / DC3000), this protein is Apolipoprotein N-acyltransferase.